Reading from the N-terminus, the 320-residue chain is Acetyl-coenzyme A carboxylase carboxyl transferase subunit alpha (320 aa).

One can recognise a CoA carboxyltransferase C-terminal domain in the interval 41-295 (RIEEKAGQAL…GDAIAQAFDE (255 aa)).

This sequence belongs to the AccA family. Acetyl-CoA carboxylase is a heterohexamer composed of biotin carboxyl carrier protein (AccB), biotin carboxylase (AccC) and two subunits each of ACCase subunit alpha (AccA) and ACCase subunit beta (AccD).

The protein resides in the cytoplasm. The catalysed reaction is N(6)-carboxybiotinyl-L-lysyl-[protein] + acetyl-CoA = N(6)-biotinyl-L-lysyl-[protein] + malonyl-CoA. The protein operates within lipid metabolism; malonyl-CoA biosynthesis; malonyl-CoA from acetyl-CoA: step 1/1. Its function is as follows. Component of the acetyl coenzyme A carboxylase (ACC) complex. First, biotin carboxylase catalyzes the carboxylation of biotin on its carrier protein (BCCP) and then the CO(2) group is transferred by the carboxyltransferase to acetyl-CoA to form malonyl-CoA. The sequence is that of Acetyl-coenzyme A carboxylase carboxyl transferase subunit alpha from Bradyrhizobium sp. (strain ORS 278).